A 183-amino-acid polypeptide reads, in one-letter code: Protein CT_584 (183 aa).

It belongs to the chlamydial CPn_0803/CT_584/TC_0873 family.

This is Protein CT_584 from Chlamydia trachomatis serovar D (strain ATCC VR-885 / DSM 19411 / UW-3/Cx).